Consider the following 226-residue polypeptide: Ribose-5-phosphate isomerase A (226 aa).

Substrate-binding positions include Thr28–Thr31, Asp84–Asp87, and Lys97–Gly100. The Proton acceptor role is filled by Glu106. Residue Lys124 participates in substrate binding.

This sequence belongs to the ribose 5-phosphate isomerase family. In terms of assembly, homodimer.

It catalyses the reaction aldehydo-D-ribose 5-phosphate = D-ribulose 5-phosphate. The protein operates within carbohydrate degradation; pentose phosphate pathway; D-ribose 5-phosphate from D-ribulose 5-phosphate (non-oxidative stage): step 1/1. Functionally, catalyzes the reversible conversion of ribose-5-phosphate to ribulose 5-phosphate. The protein is Ribose-5-phosphate isomerase A of Deinococcus radiodurans (strain ATCC 13939 / DSM 20539 / JCM 16871 / CCUG 27074 / LMG 4051 / NBRC 15346 / NCIMB 9279 / VKM B-1422 / R1).